The sequence spans 291 residues: Nucleotide-binding protein Athe_0320 (291 aa).

9 to 16 lines the ATP pocket; that stretch reads GMSGAGKS. A GTP-binding site is contributed by 60–63; sequence DIRG.

Belongs to the RapZ-like family.

Functionally, displays ATPase and GTPase activities. The polypeptide is Nucleotide-binding protein Athe_0320 (Caldicellulosiruptor bescii (strain ATCC BAA-1888 / DSM 6725 / KCTC 15123 / Z-1320) (Anaerocellum thermophilum)).